The chain runs to 875 residues: MGKTVASLGQGTRPDPVRSFNRWKKKHSHRQHQKKERRKQLKKPEWQVEREGISRLMQNYEKINVNEITRFSDFPLSKKTLKGLQEAQYRLVTEIQKQTIGLALQGKDVLGAAKTGSGKTLAFLVPVLEALYRLQWTSTDGLGVLIISPTRELAYQTFEVLRKVGKNHDFSAGLIIGGKDLKHEAERINNINILVCTPGRLLQHMDETICFHATNLQMLVLDEADRILDMGFADTMNAIIENLPKKRQTLLFSATQTKSVKDLARLSLKDPEYVWVHEKAKYSTPATLEQNYIICELHQKISVLFSFLRSHLKKKSIVFFSSCKEVQYLYRVFCRLRPGISILALHGRQQQMRRMEVYNEFVRKRAAVLFATDIAARGLDFPAVNWVLQFDCPEDANTYIHRAGRTARYKEDGEALLILLPSEEQGMVQQLLQKKVPVKEIKINPEKLIDVQKKLESFLAQDQDLKERAQRCFVSYIRSVYLMKDKEVFNVSKLPITEYALSLGLAVAPRIRFLQKLEKQPSTELVKNPVTEAVPPRAPSLPNDEADESPAYVSEKMSVLHKSGERLEETEHRLASGDGDEEQDEETEDEETEDHLGKAREPHTESVVSIEEAQKVKEVSVQFLNRDDDDEDGPDADFLTVKRRDVFGLDLKENEALSKKEPSKSSVKKKLTKVAEAKKVMKRSFKVNKKITFTDEGELVQQWPQIQKCAIKDVEEEDDTGGINLDKAKERLQEEDKFDKEEYRKKIKAKHRERRLKEREARREANKRQAKARDEEEAFLDWSDEDDGGFDPSTLPDPDKHRSSEESESEDTNHKMSDTKKKQETRKRNNTEDDDVRPRSRHGKKAKWETVEPLDTGLSLAEDEELVLHLLKSQN.

A disordered region spans residues 1 to 44; sequence MGKTVASLGQGTRPDPVRSFNRWKKKHSHRQHQKKERRKQLKKP. Thr4 bears the Phosphothreonine mark. Ser7 is modified (phosphoserine). Residues 21 to 41 are compositionally biased toward basic residues; it reads NRWKKKHSHRQHQKKERRKQL. The Q motif motif lies at 69 to 97; that stretch reads TRFSDFPLSKKTLKGLQEAQYRLVTEIQK. Residues 89–91, Gln96, and 113–120 each bind ATP; these read YRL and AKTGSGKT. The region spanning 100–274 is the Helicase ATP-binding domain; the sequence is IGLALQGKDV…RLSLKDPEYV (175 aa). The DEAD box motif lies at 222 to 225; the sequence is DEAD. The region spanning 300–449 is the Helicase C-terminal domain; sequence KISVLFSFLR…EIKINPEKLI (150 aa). The interval 525–612 is disordered; the sequence is LVKNPVTEAV…HTESVVSIEE (88 aa). A Phosphoserine modification is found at Ser540. Lys556 bears the N6-acetyllysine mark. Basic and acidic residues predominate over residues 562-575; that stretch reads KSGERLEETEHRLA. Acidic residues predominate over residues 578-593; it reads DGDEEQDEETEDEETE. Residue Thr587 is modified to Phosphothreonine. The segment covering 594-604 has biased composition (basic and acidic residues); it reads DHLGKAREPHT. A Glycyl lysine isopeptide (Lys-Gly) (interchain with G-Cter in SUMO2) cross-link involves residue Lys652. Basic and acidic residues predominate over residues 734–744; that stretch reads EEDKFDKEEYR. The tract at residues 734–860 is disordered; that stretch reads EEDKFDKEEY…VEPLDTGLSL (127 aa). Residues 745 to 754 show a composition bias toward basic residues; sequence KKIKAKHRER. Residues 755 to 774 show a composition bias toward basic and acidic residues; the sequence is RLKEREARREANKRQAKARD. The span at 775–789 shows a compositional bias: acidic residues; it reads EEEAFLDWSDEDDGG. Residue Ser783 is modified to Phosphoserine. Positions 797 to 831 are enriched in basic and acidic residues; the sequence is DPDKHRSSEESESEDTNHKMSDTKKKQETRKRNNT.

This sequence belongs to the DEAD box helicase family. DDX10/DBP4 subfamily. In terms of assembly, interacts with AIM2; this interaction promotes AIM2 stability. Interacts with SCNA; this interaction causes DDX10 mislocalization to the nucleoplasm and cytoplasmic inclusions.

The protein resides in the cytoplasm. It is found in the nucleus. Its subcellular location is the nucleolus. It catalyses the reaction ATP + H2O = ADP + phosphate + H(+). In terms of biological role, putative ATP-dependent RNA helicase that plays various role in innate immunity or inflammation. Plays a role in the enhancement of AIM2-induced inflammasome activation by interacting with AIM2 and stabilizing its protein level. Negatively regulates viral infection by promoting interferon beta production and interferon stimulated genes/ISGs expression. This Mus musculus (Mouse) protein is Probable ATP-dependent RNA helicase DDX10 (Ddx10).